We begin with the raw amino-acid sequence, 45 residues long: uncharacterized protein (45 aa).

The first 19 residues, 1–19 (MTFQILFLFVFHFVYIFRA), serve as a signal peptide directing secretion.

This is an uncharacterized protein from Saccharomyces cerevisiae (strain ATCC 204508 / S288c) (Baker's yeast).